The following is a 333-amino-acid chain: Biotin synthase (333 aa).

One can recognise a Radical SAM core domain in the interval 40–269 (YRVQLASLLS…HARVRLSAGR (230 aa)). 3 residues coordinate [4Fe-4S] cluster: Cys55, Cys59, and Cys62. [2Fe-2S] cluster contacts are provided by Cys100, Cys132, Cys192, and Arg264.

Belongs to the radical SAM superfamily. Biotin synthase family. As to quaternary structure, homodimer. It depends on [4Fe-4S] cluster as a cofactor. Requires [2Fe-2S] cluster as cofactor.

It catalyses the reaction (4R,5S)-dethiobiotin + (sulfur carrier)-SH + 2 reduced [2Fe-2S]-[ferredoxin] + 2 S-adenosyl-L-methionine = (sulfur carrier)-H + biotin + 2 5'-deoxyadenosine + 2 L-methionine + 2 oxidized [2Fe-2S]-[ferredoxin]. It participates in cofactor biosynthesis; biotin biosynthesis; biotin from 7,8-diaminononanoate: step 2/2. In terms of biological role, catalyzes the conversion of dethiobiotin (DTB) to biotin by the insertion of a sulfur atom into dethiobiotin via a radical-based mechanism. The sequence is that of Biotin synthase from Synechococcus sp. (strain CC9902).